Reading from the N-terminus, the 465-residue chain is Fumarate hydratase class II (465 aa).

Residues 99-101 (SGT), 130-133 (HPND), 140-142 (STN), and T188 each bind substrate. The active-site Proton donor/acceptor is H189. The active site involves S319. Residues S320 and 325-327 (KVN) each bind substrate.

This sequence belongs to the class-II fumarase/aspartase family. Fumarase subfamily. In terms of assembly, homotetramer.

Its subcellular location is the cytoplasm. The enzyme catalyses (S)-malate = fumarate + H2O. It functions in the pathway carbohydrate metabolism; tricarboxylic acid cycle; (S)-malate from fumarate: step 1/1. In terms of biological role, involved in the TCA cycle. Catalyzes the stereospecific interconversion of fumarate to L-malate. The protein is Fumarate hydratase class II of Prochlorococcus marinus (strain SARG / CCMP1375 / SS120).